The following is a 627-amino-acid chain: Putative ankyrin repeat protein L122 (627 aa).

ANK repeat units lie at residues 61 to 94, 98 to 130, 153 to 186, 190 to 223, 228 to 259, 263 to 296, 300 to 333, 337 to 370, 374 to 407, 411 to 444, 448 to 480, and 491 to 523; these read KGWT…DVHI, KGRT…DINS, HACY…DPNI, YGKT…NANH, AETV…DINH, IGFT…NINL, DGFT…DIND, NNVT…DLEI, YDWT…NVNV, LGHT…NPNL, DKNT…DSNT, and REYN…NYSD.

The protein is Putative ankyrin repeat protein L122 of Acanthamoeba polyphaga (Amoeba).